Reading from the N-terminus, the 146-residue chain is Snake venom vascular endothelial growth factor toxin TfsvVEGF (146 aa).

A signal peptide spans 1-24 (MAAYLLAVAILFCIQGWPSGTVQG). Pyrrolidone carboxylic acid is present on Gln25. 3 disulfide bridges follow: Cys38-Cys80, Cys69-Cys115, and Cys73-Cys117. A compositionally biased stretch (basic and acidic residues) spans 118–139 (RPRSPGDVNNGKDKRNPEEGGP). The disordered stretch occupies residues 118–146 (RPRSPGDVNNGKDKRNPEEGGPRARFPFV).

The protein belongs to the PDGF/VEGF growth factor family. Snake venom VEGF subfamily. As to quaternary structure, homodimer; disulfide-linked. Interacts with VEGF receptor-1 (FLT1) with a high affinity, whereas it binds to VEGF receptor-2 (KDR) with a low affinity. Does not bind VEGF receptor-3 (FLT4). Expressed by the venom gland.

Its subcellular location is the secreted. Snake venom VEGFs may contribute to venom dispersion and prey subjugation by inducing vascular permeability and hypotension. This protein strongly increases vascular permeability, and weakly stimulates angiogenesis. Interacts with VEGF receptor-1 (FLT1) with a high affinity, whereas it binds to VEGF receptor-2 (KDR) with a low affinity. Stimulates autophosphorylation of VEGF receptor-1 (VEGFR-1/FLT1), and VEGF receptor-2 (VEGFR-2/KDR). The polypeptide is Snake venom vascular endothelial growth factor toxin TfsvVEGF (Protobothrops flavoviridis (Habu)).